The chain runs to 301 residues: Sulfate adenylyltransferase subunit 2 (301 aa).

It belongs to the PAPS reductase family. CysD subfamily. As to quaternary structure, heterodimer composed of CysD, the smaller subunit, and CysN.

It catalyses the reaction sulfate + ATP + H(+) = adenosine 5'-phosphosulfate + diphosphate. It participates in sulfur metabolism; hydrogen sulfide biosynthesis; sulfite from sulfate: step 1/3. With CysN forms the ATP sulfurylase (ATPS) that catalyzes the adenylation of sulfate producing adenosine 5'-phosphosulfate (APS) and diphosphate, the first enzymatic step in sulfur assimilation pathway. APS synthesis involves the formation of a high-energy phosphoric-sulfuric acid anhydride bond driven by GTP hydrolysis by CysN coupled to ATP hydrolysis by CysD. The polypeptide is Sulfate adenylyltransferase subunit 2 (Geotalea daltonii (strain DSM 22248 / JCM 15807 / FRC-32) (Geobacter daltonii)).